Reading from the N-terminus, the 426-residue chain is Serine hydroxymethyltransferase 1 (426 aa).

(6S)-5,6,7,8-tetrahydrofolate-binding positions include L121 and 125 to 127 (GHL). K230 is modified (N6-(pyridoxal phosphate)lysine). 355–357 (SPF) is a (6S)-5,6,7,8-tetrahydrofolate binding site.

Belongs to the SHMT family. In terms of assembly, homodimer. It depends on pyridoxal 5'-phosphate as a cofactor.

The protein resides in the cytoplasm. It carries out the reaction (6R)-5,10-methylene-5,6,7,8-tetrahydrofolate + glycine + H2O = (6S)-5,6,7,8-tetrahydrofolate + L-serine. It functions in the pathway one-carbon metabolism; tetrahydrofolate interconversion. It participates in amino-acid biosynthesis; glycine biosynthesis; glycine from L-serine: step 1/1. Functionally, catalyzes the reversible interconversion of serine and glycine with tetrahydrofolate (THF) serving as the one-carbon carrier. This reaction serves as the major source of one-carbon groups required for the biosynthesis of purines, thymidylate, methionine, and other important biomolecules. Also exhibits THF-independent aldolase activity toward beta-hydroxyamino acids, producing glycine and aldehydes, via a retro-aldol mechanism. The polypeptide is Serine hydroxymethyltransferase 1 (Hahella chejuensis (strain KCTC 2396)).